Consider the following 545-residue polypeptide: Threonine--tRNA ligase catalytic subunit (545 aa).

The segment at Asp139–Pro433 is catalytic. Residues Cys231, His282, and His410 each contribute to the Zn(2+) site.

Belongs to the class-II aminoacyl-tRNA synthetase family. As to quaternary structure, homodimer. Probably interacts with its editing subunit. Zn(2+) serves as cofactor.

It is found in the cytoplasm. It carries out the reaction tRNA(Thr) + L-threonine + ATP = L-threonyl-tRNA(Thr) + AMP + diphosphate + H(+). Functionally, catalyzes the attachment of threonine to tRNA(Thr) in a two-step reaction: L-threonine is first activated by ATP to form Thr-AMP and then transferred to the acceptor end of tRNA(Thr). Also activates L-serine and transfers it to tRNA(Thr) but cannot deacylate incorrectly charged amino acid; unlike most archaea the editing function is found in a freestanding protein. This Saccharolobus islandicus (strain M.16.27) (Sulfolobus islandicus) protein is Threonine--tRNA ligase catalytic subunit.